Consider the following 66-residue polypeptide: UPF0457 protein BA_2525/GBAA_2525/BAS2348 (66 aa).

The protein belongs to the UPF0457 family.

This chain is UPF0457 protein BA_2525/GBAA_2525/BAS2348, found in Bacillus anthracis.